A 117-amino-acid chain; its full sequence is Large ribosomal subunit protein bL20 (117 aa).

This sequence belongs to the bacterial ribosomal protein bL20 family.

In terms of biological role, binds directly to 23S ribosomal RNA and is necessary for the in vitro assembly process of the 50S ribosomal subunit. It is not involved in the protein synthesizing functions of that subunit. The protein is Large ribosomal subunit protein bL20 of Aliivibrio salmonicida (strain LFI1238) (Vibrio salmonicida (strain LFI1238)).